The chain runs to 178 residues: MAIILGIDPGSRLTGYGVIEQRGRQLNYLGSGCIKVIGTTKEPLTLAEKLRRIHDSVSELITQFKPNEFAIEQVFMAKNPDSALKLGQARGAAIVAAACAELPVAEYSARQIKQSVVGNGGAEKSQVQHMVMALLNLQRCPQEDAADALAVALCHAHSSQNLIKMAGAARKTVRGRLR.

Residues D8, E72, and D144 contribute to the active site. Residues D8, E72, and D144 each coordinate Mg(2+).

It belongs to the RuvC family. As to quaternary structure, homodimer which binds Holliday junction (HJ) DNA. The HJ becomes 2-fold symmetrical on binding to RuvC with unstacked arms; it has a different conformation from HJ DNA in complex with RuvA. In the full resolvosome a probable DNA-RuvA(4)-RuvB(12)-RuvC(2) complex forms which resolves the HJ. The cofactor is Mg(2+).

The protein localises to the cytoplasm. It catalyses the reaction Endonucleolytic cleavage at a junction such as a reciprocal single-stranded crossover between two homologous DNA duplexes (Holliday junction).. Functionally, the RuvA-RuvB-RuvC complex processes Holliday junction (HJ) DNA during genetic recombination and DNA repair. Endonuclease that resolves HJ intermediates. Cleaves cruciform DNA by making single-stranded nicks across the HJ at symmetrical positions within the homologous arms, yielding a 5'-phosphate and a 3'-hydroxyl group; requires a central core of homology in the junction. The consensus cleavage sequence is 5'-(A/T)TT(C/G)-3'. Cleavage occurs on the 3'-side of the TT dinucleotide at the point of strand exchange. HJ branch migration catalyzed by RuvA-RuvB allows RuvC to scan DNA until it finds its consensus sequence, where it cleaves and resolves the cruciform DNA. This Idiomarina loihiensis (strain ATCC BAA-735 / DSM 15497 / L2-TR) protein is Crossover junction endodeoxyribonuclease RuvC.